A 438-amino-acid polypeptide reads, in one-letter code: Adenylyltransferase and sulfurtransferase UBA4 (438 aa).

ATP-binding positions include glycine 81, aspartate 102, 109-113 (SNLHR), lysine 126, and 170-171 (DH). Zn(2+) contacts are provided by cysteine 212 and cysteine 215. Cysteine 229 serves as the catalytic Glycyl thioester intermediate; for adenylyltransferase activity. 2 residues coordinate Zn(2+): cysteine 290 and cysteine 293. In terms of domain architecture, Rhodanese spans 340–436 (NKKKHILIDV…WSDDVDSKIP (97 aa)). Cysteine 396 (cysteine persulfide intermediate; for sulfurtransferase activity) is an active-site residue.

This sequence in the N-terminal section; belongs to the HesA/MoeB/ThiF family. UBA4 subfamily. Zn(2+) serves as cofactor.

Its subcellular location is the cytoplasm. It is found in the cytosol. It functions in the pathway tRNA modification; 5-methoxycarbonylmethyl-2-thiouridine-tRNA biosynthesis. In terms of biological role, plays a central role in 2-thiolation of mcm(5)S(2)U at tRNA wobble positions of cytosolic tRNA(Lys), tRNA(Glu) and tRNA(Gln). Acts by mediating the C-terminal thiocarboxylation of sulfur carrier URM1. Its N-terminus first activates URM1 as acyl-adenylate (-COAMP), then the persulfide sulfur on the catalytic cysteine is transferred to URM1 to form thiocarboxylation (-COSH) of its C-terminus. The reaction probably involves hydrogen sulfide that is generated from the persulfide intermediate and that acts as a nucleophile towards URM1. Subsequently, a transient disulfide bond is formed. Does not use thiosulfate as sulfur donor; NFS1 probably acting as a sulfur donor for thiocarboxylation reactions. Prior mcm(5) tRNA modification by the elongator complex is required for 2-thiolation. May also be involved in protein urmylation. The protein is Adenylyltransferase and sulfurtransferase UBA4 of Candida albicans (strain SC5314 / ATCC MYA-2876) (Yeast).